The following is a 549-amino-acid chain: Polynucleotide 5'-hydroxyl-kinase nol-9 (549 aa).

190–197 is a binding site for ATP; that stretch reads GHKGAGKS.

The protein belongs to the Clp1 family. NOL9/GRC3 subfamily.

It localises to the nucleus. The protein resides in the nucleolus. In terms of biological role, polynucleotide 5'-kinase involved in rRNA processing. The chain is Polynucleotide 5'-hydroxyl-kinase nol-9 (nol-9) from Caenorhabditis elegans.